The chain runs to 262 residues: Outer membrane protein assembly factor BamD (262 aa).

The signal sequence occupies residues 1–18 (MRKIKSLALLAVAALVIG). A lipid anchor (N-palmitoyl cysteine) is attached at cysteine 19. Cysteine 19 carries S-diacylglycerol cysteine lipidation.

It belongs to the BamD family. As to quaternary structure, part of the Bam complex.

It localises to the cell outer membrane. Part of the outer membrane protein assembly complex, which is involved in assembly and insertion of beta-barrel proteins into the outer membrane. The sequence is that of Outer membrane protein assembly factor BamD from Haemophilus influenzae (strain ATCC 51907 / DSM 11121 / KW20 / Rd).